Reading from the N-terminus, the 48-residue chain is Cytochrome b559 subunit beta (48 aa).

Residues 23–39 (WLAVHALAIPSVFFLGA) form a helical membrane-spanning segment. His-27 is a heme binding site.

This sequence belongs to the PsbE/PsbF family. In terms of assembly, heterodimer of an alpha subunit and a beta subunit. PSII is composed of 1 copy each of membrane proteins PsbA, PsbB, PsbC, PsbD, PsbE, PsbF, PsbH, PsbI, PsbJ, PsbK, PsbL, PsbM, PsbT, PsbX, PsbY, Psb30/Ycf12, peripheral proteins PsbO, CyanoQ (PsbQ), PsbU, PsbV and a large number of cofactors. It forms dimeric complexes. The cofactor is heme b.

It localises to the cellular thylakoid membrane. Functionally, this b-type cytochrome is tightly associated with the reaction center of photosystem II (PSII). PSII is a light-driven water:plastoquinone oxidoreductase that uses light energy to abstract electrons from H(2)O, generating O(2) and a proton gradient subsequently used for ATP formation. It consists of a core antenna complex that captures photons, and an electron transfer chain that converts photonic excitation into a charge separation. This chain is Cytochrome b559 subunit beta, found in Prochlorococcus marinus (strain MIT 9515).